We begin with the raw amino-acid sequence, 28 residues long: Glutathione S-transferase 5 (28 aa).

The region spanning 1 to 28 (PNYKLTYFNLRGRAEISRYLFAYAGIKY) is the GST N-terminal domain. Tyr7 provides a ligand contact to glutathione.

It belongs to the GST superfamily. Sigma family. Homodimer.

It localises to the cytoplasm. The enzyme catalyses RX + glutathione = an S-substituted glutathione + a halide anion + H(+). Conjugation of reduced glutathione to a wide number of exogenous and endogenous hydrophobic electrophiles. The chain is Glutathione S-transferase 5 from Gallus gallus (Chicken).